A 314-amino-acid polypeptide reads, in one-letter code: Cell division protein FtsQ (314 aa).

Composition is skewed to basic and acidic residues over residues 1–15 (MTEH…RVAD) and 30–57 (ESKD…ERRA). The segment at 1–57 (MTEHNEDPQIERVADDAADEEAVTEPLATESKDEPAEHPEFEGPRRRARRERAERRA) is disordered. Topologically, residues 1-99 (MTEHNEDPQI…AARGVVRGLK (99 aa)) are cytoplasmic. The helical transmembrane segment at 100-120 (ALLATVVLAVVGIGLGLALYF) threads the bilayer. Topologically, residues 121–314 (TPAMSAREIV…VSSPDLPTVK (194 aa)) are extracellular. The 69-residue stretch at 124-192 (MSAREIVIIG…SALRITIVER (69 aa)) folds into the POTRA domain.

Belongs to the FtsQ/DivIB family. FtsQ subfamily.

The protein localises to the cell membrane. Its function is as follows. Essential cell division protein. The sequence is that of Cell division protein FtsQ from Mycobacterium bovis (strain ATCC BAA-935 / AF2122/97).